The chain runs to 275 residues: Large ribosomal subunit protein uL2c (275 aa).

The disordered stretch occupies residues 219-254 (TVRGSVMNPCDHPHGGGEGRAPIGRTRPLTPWGKPA).

The protein belongs to the universal ribosomal protein uL2 family. In terms of assembly, part of the 50S ribosomal subunit.

It is found in the plastid. The protein resides in the chloroplast. This Phaeodactylum tricornutum (strain CCAP 1055/1) protein is Large ribosomal subunit protein uL2c (rpl2).